Consider the following 331-residue polypeptide: Anthranilate phosphoribosyltransferase (331 aa).

5-phospho-alpha-D-ribose 1-diphosphate is bound by residues G79, 82 to 83, S87, 89 to 92, 107 to 115, and S119; these read GD, NIST, and KHCNGNISS. G79 contributes to the anthranilate binding site. Residue S91 participates in Mg(2+) binding. N110 is an anthranilate binding site. An anthranilate-binding site is contributed by R165. Mg(2+) contacts are provided by D223 and E224.

This sequence belongs to the anthranilate phosphoribosyltransferase family. As to quaternary structure, homodimer. It depends on Mg(2+) as a cofactor.

The catalysed reaction is N-(5-phospho-beta-D-ribosyl)anthranilate + diphosphate = 5-phospho-alpha-D-ribose 1-diphosphate + anthranilate. It participates in amino-acid biosynthesis; L-tryptophan biosynthesis; L-tryptophan from chorismate: step 2/5. Functionally, catalyzes the transfer of the phosphoribosyl group of 5-phosphorylribose-1-pyrophosphate (PRPP) to anthranilate to yield N-(5'-phosphoribosyl)-anthranilate (PRA). This is Anthranilate phosphoribosyltransferase from Buchnera aphidicola subsp. Baizongia pistaciae (strain Bp).